A 51-amino-acid polypeptide reads, in one-letter code: Defensin (51 aa).

Intrachain disulfides connect Cys-3–Cys-31, Cys-17–Cys-36, and Cys-21–Cys-38. The residue at position 51 (Phe-51) is a Phenylalanine amide.

It localises to the secreted. Functionally, antibacterial peptide against Gram-positive and Gram-negative bacteria and fungi. In Bombus pascuorum (Common carder bumblebee), this protein is Defensin.